A 168-amino-acid polypeptide reads, in one-letter code: Small ribosomal subunit protein uS4 (168 aa).

Residues 103 to 167 (RRLQTIVYKK…SPFKKSIEEK (65 aa)) form the S4 RNA-binding domain.

It belongs to the universal ribosomal protein uS4 family. As to quaternary structure, part of the 30S ribosomal subunit. Contacts protein S5. The interaction surface between S4 and S5 is involved in control of translational fidelity.

In terms of biological role, one of the primary rRNA binding proteins, it binds directly to 16S rRNA where it nucleates assembly of the body of the 30S subunit. With S5 and S12 plays an important role in translational accuracy. The polypeptide is Small ribosomal subunit protein uS4 (Staphylothermus marinus (strain ATCC 43588 / DSM 3639 / JCM 9404 / F1)).